Reading from the N-terminus, the 864-residue chain is Eukaryotic translation initiation factor 3 subunit C (864 aa).

The interval 1–77 (MSRFFARGGS…EESEDEERVT (77 aa)) is disordered. Positions 14 to 54 (SSSEDEQELYSDREEEEQFSDSEEESSEAESSEEESSDDEG) are enriched in acidic residues. In terms of domain architecture, PCI spans 602–776 (FHMHINLELL…NAIVFRKGVE (175 aa)). The segment at 815–864 (RDQGAGARGGRGAGRGGQARGGPRFPGGQQGRRPGGQQFSGGALGGAIKA) is disordered. The span at 820-864 (GARGGRGAGRGGQARGGPRFPGGQQGRRPGGQQFSGGALGGAIKA) shows a compositional bias: gly residues.

The protein belongs to the eIF-3 subunit C family. Component of the eukaryotic translation initiation factor 3 (eIF-3) complex.

The protein resides in the cytoplasm. In terms of biological role, component of the eukaryotic translation initiation factor 3 (eIF-3) complex, which is involved in protein synthesis of a specialized repertoire of mRNAs and, together with other initiation factors, stimulates binding of mRNA and methionyl-tRNAi to the 40S ribosome. The eIF-3 complex specifically targets and initiates translation of a subset of mRNAs involved in cell proliferation. The sequence is that of Eukaryotic translation initiation factor 3 subunit C (nip1) from Aspergillus terreus (strain NIH 2624 / FGSC A1156).